Reading from the N-terminus, the 429-residue chain is Gamma-glutamyl phosphate reductase (429 aa).

It belongs to the gamma-glutamyl phosphate reductase family.

It localises to the cytoplasm. The enzyme catalyses L-glutamate 5-semialdehyde + phosphate + NADP(+) = L-glutamyl 5-phosphate + NADPH + H(+). The protein operates within amino-acid biosynthesis; L-proline biosynthesis; L-glutamate 5-semialdehyde from L-glutamate: step 2/2. Its function is as follows. Catalyzes the NADPH-dependent reduction of L-glutamate 5-phosphate into L-glutamate 5-semialdehyde and phosphate. The product spontaneously undergoes cyclization to form 1-pyrroline-5-carboxylate. In Methylocella silvestris (strain DSM 15510 / CIP 108128 / LMG 27833 / NCIMB 13906 / BL2), this protein is Gamma-glutamyl phosphate reductase.